Consider the following 149-residue polypeptide: Transthyretin (149 aa).

Positions 1 to 20 are cleaved as a signal peptide; sequence MAFHSLLLLCLAGLVFLSEA. Position 32 is a sulfocysteine (cysteine 32). L-thyroxine is bound at residue lysine 37. 4-carboxyglutamate is present on glutamate 64. L-thyroxine is bound by residues glutamate 76 and serine 139.

The protein belongs to the transthyretin family. As to quaternary structure, homotetramer. Dimer of dimers. In the homotetramer, subunits assemble around a central channel that can accommodate two ligand molecules. Interacts with RBP4. Sulfonation of the reactive cysteine Cys-32 enhances the stability of the native conformation of TTR, avoiding misassembly of the protein leading to amyloid formation. As to expression, highly expressed in the choroid plexus.

The protein resides in the secreted. In terms of biological role, thyroid hormone-binding protein. Probably transports thyroxine from the bloodstream to the brain. This Sminthopsis macroura (Stripe-faced dunnart) protein is Transthyretin (TTR).